We begin with the raw amino-acid sequence, 182 residues long: MSKFYDPSQPEQSYDSPKLFGIIPIKFIVSFLQLVSIVSQILWLYSENDKIYLVLLSVGIVLNVFTVVVFIKEHKLLMRAHYYSALIFTVVPFIYAVYTFISFIELFFGDKDITFNQCSPFAYAFIFLCIYIFYLAMCRVLIKASEFQPDDMPDLDTTQGLFHYNRDAYDGGERAKLMYGEV.

The next 4 helical transmembrane spans lie at 19-39 (LFGI…SIVS), 51-71 (IYLV…VVFI), 87-107 (IFTV…IELF), and 118-138 (CSPF…LAMC).

It localises to the membrane. This is an uncharacterized protein from Caenorhabditis elegans.